The primary structure comprises 213 residues: Orotate phosphoribosyltransferase (213 aa).

Residue lysine 26 coordinates 5-phospho-alpha-D-ribose 1-diphosphate. 34–35 is an orotate binding site; the sequence is FF. 5-phospho-alpha-D-ribose 1-diphosphate contacts are provided by residues 72 to 73, arginine 99, lysine 100, lysine 103, histidine 105, and 124 to 132; these read YK and DDVITAGTA. Residues threonine 128 and arginine 156 each contribute to the orotate site.

It belongs to the purine/pyrimidine phosphoribosyltransferase family. PyrE subfamily. In terms of assembly, homodimer. The cofactor is Mg(2+).

It carries out the reaction orotidine 5'-phosphate + diphosphate = orotate + 5-phospho-alpha-D-ribose 1-diphosphate. The protein operates within pyrimidine metabolism; UMP biosynthesis via de novo pathway; UMP from orotate: step 1/2. In terms of biological role, catalyzes the transfer of a ribosyl phosphate group from 5-phosphoribose 1-diphosphate to orotate, leading to the formation of orotidine monophosphate (OMP). This chain is Orotate phosphoribosyltransferase, found in Shigella sonnei (strain Ss046).